The primary structure comprises 104 residues: uncharacterized protein (104 aa).

This is an uncharacterized protein from Orgyia pseudotsugata (Douglas-fir tussock moth).